Reading from the N-terminus, the 438-residue chain is Putative hydroxypyruvate reductase (438 aa).

The enzyme catalyses (R)-glycerate + NAD(+) = 3-hydroxypyruvate + NADH + H(+). It catalyses the reaction (R)-glycerate + NADP(+) = 3-hydroxypyruvate + NADPH + H(+). It functions in the pathway carbohydrate acid metabolism; tartrate degradation; 3-hydroxypyruvate from D-glycerate: step 1/1. Degrades an unidentified toxic product from the first step of tartrate degradation. The chain is Putative hydroxypyruvate reductase (ttuD) from Agrobacterium vitis (Rhizobium vitis).